Here is a 291-residue protein sequence, read N- to C-terminus: Protease HtpX homolog (291 aa).

2 helical membrane passes run 4-24 and 38-58; these read VFLFLITNLAVILVLSFSARL and LGMLLAFAALIGFGGSFISLL. Position 144 (H144) interacts with Zn(2+). E145 is an active-site residue. H148 provides a ligand contact to Zn(2+). 2 helical membrane passes run 159 to 179 and 199 to 219; these read LIQGVVNTFVIFLARVFAYAL and ISSIAFEIVFGILASIVVMYF. Residue E224 coordinates Zn(2+).

Belongs to the peptidase M48B family. It depends on Zn(2+) as a cofactor.

Its subcellular location is the cell inner membrane. The chain is Protease HtpX homolog from Chlorobium luteolum (strain DSM 273 / BCRC 81028 / 2530) (Pelodictyon luteolum).